Here is a 491-residue protein sequence, read N- to C-terminus: Transcriptional regulatory protein dep1 (491 aa).

Disordered regions lie at residues 1 to 74 and 155 to 301; these read MTEN…LPSQ and NSVE…DDEK. Over residues 10 to 20 the composition is skewed to basic and acidic residues; the sequence is IPHEILPKEPF. 2 stretches are compositionally biased toward polar residues: residues 54-63 and 155-171; these read ALSNPETNAN and NSVE…TIVS. A compositionally biased stretch (basic and acidic residues) spans 175–186; that stretch reads KESDFESEEKAT. Residues 187–196 are compositionally biased toward polar residues; it reads NDNNGLIETN. A Phosphoserine modification is found at serine 204. Residues 205–215 show a composition bias toward acidic residues; the sequence is SEHEEEEDEES. Composition is skewed to basic and acidic residues over residues 216 to 227 and 282 to 301; these read NIERTEDSDHQI and REIA…DDEK. Serine 223 carries the post-translational modification Phosphoserine.

As to quaternary structure, component of the RPD3C(L) complex.

The protein resides in the nucleus. Its function is as follows. Component of the RPD3C(L) histone deacetylase complex (HDAC) responsible for the deacetylation of lysine residues on the N-terminal part of the core histones (H2A, H2B, H3 and H4). Histone deacetylation gives a tag for epigenetic repression and plays an important role in transcriptional regulation, cell cycle progression and developmental events. The sequence is that of Transcriptional regulatory protein dep1 (dep1) from Schizosaccharomyces pombe (strain 972 / ATCC 24843) (Fission yeast).